Consider the following 210-residue polypeptide: Small ribosomal subunit protein uS3 (210 aa).

In terms of domain architecture, KH type-2 spans 38-106 (IRAFLKKRLY…EIFINIIEVR (69 aa)).

It belongs to the universal ribosomal protein uS3 family. Part of the 30S ribosomal subunit. Forms a tight complex with proteins S10 and S14.

Its function is as follows. Binds the lower part of the 30S subunit head. Binds mRNA in the 70S ribosome, positioning it for translation. This chain is Small ribosomal subunit protein uS3, found in Pelobacter propionicus (strain DSM 2379 / NBRC 103807 / OttBd1).